We begin with the raw amino-acid sequence, 357 residues long: Membrane-bound lytic murein transglycosylase C (357 aa).

A signal peptide spans 1–16; it reads MKKILPLVIIAPLLIS. C17 carries the N-palmitoyl cysteine lipid modification. The S-diacylglycerol cysteine moiety is linked to residue C17.

It belongs to the transglycosylase Slt family.

The protein localises to the cell outer membrane. The catalysed reaction is Exolytic cleavage of the (1-&gt;4)-beta-glycosidic linkage between N-acetylmuramic acid (MurNAc) and N-acetylglucosamine (GlcNAc) residues in peptidoglycan, from either the reducing or the non-reducing ends of the peptidoglycan chains, with concomitant formation of a 1,6-anhydrobond in the MurNAc residue.. Its function is as follows. Murein-degrading enzyme. May play a role in recycling of muropeptides during cell elongation and/or cell division. In Sodalis glossinidius (strain morsitans), this protein is Membrane-bound lytic murein transglycosylase C.